The chain runs to 495 residues: ATP synthase subunit beta, chloroplastic (495 aa).

Gly172–Thr179 provides a ligand contact to ATP.

It belongs to the ATPase alpha/beta chains family. F-type ATPases have 2 components, CF(1) - the catalytic core - and CF(0) - the membrane proton channel. CF(1) has five subunits: alpha(3), beta(3), gamma(1), delta(1), epsilon(1). CF(0) has four main subunits: a(1), b(1), b'(1) and c(9-12).

The protein resides in the plastid. The protein localises to the chloroplast thylakoid membrane. It catalyses the reaction ATP + H2O + 4 H(+)(in) = ADP + phosphate + 5 H(+)(out). In terms of biological role, produces ATP from ADP in the presence of a proton gradient across the membrane. The catalytic sites are hosted primarily by the beta subunits. This Convallaria majalis (Lily of the valley) protein is ATP synthase subunit beta, chloroplastic.